A 787-amino-acid chain; its full sequence is Integrin beta-6 (787 aa).

Residues 1–21 form the signal peptide; the sequence is MGIELVCLFLLLLGRNDHVQG. The PSI domain maps to 22–71; it reads GCAWGGAESCSDCLLTGPHCAWCSQENFTHLSGAGERCDTPANLLAKGCQ. The Extracellular portion of the chain corresponds to 22–708; the sequence is GCAWGGAESC…KDCPKPPNIP (687 aa). Disulfide bonds link Cys23-Cys41, Cys31-Cys454, Cys34-Cys59, Cys44-Cys70, Cys197-Cys204, Cys252-Cys293, Cys394-Cys406, Cys426-Cys452, Cys456-Cys476, Cys467-Cys479, Cys481-Cys490, Cys492-Cys519, Cys502-Cys517, Cys511-Cys522, Cys524-Cys537, Cys539-Cys560, Cys544-Cys558, Cys552-Cys563, and Cys565-Cys574. N-linked (GlcNAc...) asparagine glycans are attached at residues Asn48 and Asn97. The region spanning 131–371 is the VWFA domain; it reads YPVDLYYLMD…QLIISAYEEL (241 aa). Mg(2+) contacts are provided by Asp140, Ser142, and Ser144. Ca(2+)-binding residues include Ser144, Asp147, Asp148, and Glu179. Asn235, Asp237, Pro239, and Glu240 together coordinate Ca(2+). Residue Glu240 coordinates Mg(2+). Asn260 carries an N-linked (GlcNAc...) asparagine glycan. Asp271 and Lys355 together coordinate Ca(2+). N-linked (GlcNAc...) asparagine glycosylation is present at Asn387. An N-linked (GlcNAc...) asparagine glycan is attached at Asn418. I-EGF domains follow at residues 456–491, 492–538, 539–575, and 576–615; these read CQREIETNSSKCHNGNGSFQCGVCTCNPGHMGPHCE, CGED…PYCQ, CDNFSCLRHKGLLCGDNGDCDCGECVCRDGWTGEYCN, and CTTNRDSCTSEDGVLCSGRGDCVCGKCVCRNPGASGPTCE. Asn463 and Asn471 each carry an N-linked (GlcNAc...) asparagine glycan. An N-linked (GlcNAc...) asparagine glycan is attached at Asn541. The N-linked (GlcNAc...) asparagine glycan is linked to Asn575. 9 disulfide bridges follow: Cys576–Cys599, Cys583–Cys597, Cys591–Cys602, Cys604–Cys614, Cys617–Cys620, Cys624–Cys669, Cys630–Cys649, Cys633–Cys645, and Cys677–Cys701. A helical membrane pass occupies residues 709 to 729; it reads MIMLGVSLAILLIGVVLLCIW. Residues 730–757 are interaction with HAX1; it reads KLLVSFHDRKEVAKFEAERSKAKWQTGT. Over 730-787 the chain is Cytoplasmic; sequence KLLVSFHDRKEVAKFEAERSKAKWQTGTNPLYRGSTSTFKNVTYKHREKHKAGLSSDG.

It belongs to the integrin beta chain family. As to quaternary structure, heterodimer of an alpha and a beta subunit. Interacts with FLNB. Interacts with HAX1. ITGAV:ITGB6 interacts with FBN1. ITGAV:ITGB6 interacts with TGFB1.

Its subcellular location is the cell membrane. The protein resides in the cell junction. It is found in the focal adhesion. Integrin alpha-V:beta-6 (ITGAV:ITGB6) is a receptor for fibronectin and cytotactin. It recognizes the sequence R-G-D in its ligands. ITGAV:ITGB6 acts as a receptor for fibrillin-1 (FBN1) and mediates R-G-D-dependent cell adhesion to FBN1. Integrin alpha-V:beta-6 (ITGAV:ITGB6) mediates R-G-D-dependent release of transforming growth factor beta-1 (TGF-beta-1) from regulatory Latency-associated peptide (LAP), thereby playing a key role in TGF-beta-1 activation. The polypeptide is Integrin beta-6 (Itgb6) (Mus musculus (Mouse)).